Reading from the N-terminus, the 1053-residue chain is Carbamoyl phosphate synthase large chain (1053 aa).

The interval 1-397 (MPKRTDIKKV…SFMKAKRSID (397 aa)) is carboxyphosphate synthetic domain. 12 residues coordinate ATP: R127, R167, G173, G174, E206, V208, E213, G239, I240, H241, Q282, and E294. The ATP-grasp 1 domain occupies 131 to 323 (RDLMNEIGEP…IARVAAKIAI (193 aa)). The Mg(2+) site is built by Q282, E294, and N296. 3 residues coordinate Mn(2+): Q282, E294, and N296. The segment at 398-530 (TDVRTHTSPS…YSTREGTSEI (133 aa)) is oligomerization domain. Positions 531–919 (VRDKKQKILI…YKACISADNE (389 aa)) are carbamoyl phosphate synthetic domain. In terms of domain architecture, ATP-grasp 2 spans 661–852 (SVLLTTLQIP…IAKIAAKVMI (192 aa)). ATP is bound by residues R697, S736, L738, E743, G768, I769, H770, S771, Q811, and E823. 3 residues coordinate Mg(2+): Q811, E823, and N825. Q811, E823, and N825 together coordinate Mn(2+). Positions 918–1053 (NELPLKGNVF…TLEPLSHYLR (136 aa)) constitute an MGS-like domain. The interval 920–1053 (LPLKGNVFVS…TLEPLSHYLR (134 aa)) is allosteric domain.

This sequence belongs to the CarB family. Composed of two chains; the small (or glutamine) chain promotes the hydrolysis of glutamine to ammonia, which is used by the large (or ammonia) chain to synthesize carbamoyl phosphate. Tetramer of heterodimers (alpha,beta)4. The cofactor is Mg(2+). It depends on Mn(2+) as a cofactor.

The catalysed reaction is hydrogencarbonate + L-glutamine + 2 ATP + H2O = carbamoyl phosphate + L-glutamate + 2 ADP + phosphate + 2 H(+). The enzyme catalyses hydrogencarbonate + NH4(+) + 2 ATP = carbamoyl phosphate + 2 ADP + phosphate + 2 H(+). It functions in the pathway amino-acid biosynthesis; L-arginine biosynthesis; carbamoyl phosphate from bicarbonate: step 1/1. Its pathway is pyrimidine metabolism; UMP biosynthesis via de novo pathway; (S)-dihydroorotate from bicarbonate: step 1/3. Functionally, large subunit of the glutamine-dependent carbamoyl phosphate synthetase (CPSase). CPSase catalyzes the formation of carbamoyl phosphate from the ammonia moiety of glutamine, carbonate, and phosphate donated by ATP, constituting the first step of 2 biosynthetic pathways, one leading to arginine and/or urea and the other to pyrimidine nucleotides. The large subunit (synthetase) binds the substrates ammonia (free or transferred from glutamine from the small subunit), hydrogencarbonate and ATP and carries out an ATP-coupled ligase reaction, activating hydrogencarbonate by forming carboxy phosphate which reacts with ammonia to form carbamoyl phosphate. The sequence is that of Carbamoyl phosphate synthase large chain from Methanoregula boonei (strain DSM 21154 / JCM 14090 / 6A8).